A 549-amino-acid chain; its full sequence is Chaperonin GroEL 3 (549 aa).

ATP-binding positions include 29–32 (TLGP), 86–90 (DGTTT), Gly-414, 477–479 (NAA), and Asp-493.

The protein belongs to the chaperonin (HSP60) family. As to quaternary structure, forms a cylinder of 14 subunits composed of two heptameric rings stacked back-to-back. Interacts with the co-chaperonin GroES.

It localises to the cytoplasm. The catalysed reaction is ATP + H2O + a folded polypeptide = ADP + phosphate + an unfolded polypeptide.. Functionally, together with its co-chaperonin GroES, plays an essential role in assisting protein folding. The GroEL-GroES system forms a nano-cage that allows encapsulation of the non-native substrate proteins and provides a physical environment optimized to promote and accelerate protein folding. The polypeptide is Chaperonin GroEL 3 (Frankia casuarinae (strain DSM 45818 / CECT 9043 / HFP020203 / CcI3)).